A 103-amino-acid polypeptide reads, in one-letter code: Glutaredoxin-C11 (103 aa).

Positions 1–102 (MERIRDLSSK…QMLKDAKAIW (102 aa)) constitute a Glutaredoxin domain. C21 and C24 are joined by a disulfide.

It belongs to the glutaredoxin family. CC-type subfamily.

The protein resides in the cytoplasm. In terms of biological role, has a glutathione-disulfide oxidoreductase activity in the presence of NADPH and glutathione reductase. Reduces low molecular weight disulfides and proteins. This Arabidopsis thaliana (Mouse-ear cress) protein is Glutaredoxin-C11 (GRXC11).